We begin with the raw amino-acid sequence, 653 residues long: Chaperone protein dnaK3 (653 aa).

At T197 the chain carries Phosphothreonine; by autocatalysis.

This sequence belongs to the heat shock protein 70 family.

Functionally, acts as a chaperone. This is Chaperone protein dnaK3 (dnaK3) from Nostoc sp. (strain PCC 7120 / SAG 25.82 / UTEX 2576).